The chain runs to 336 residues: F420-dependent glucose-6-phosphate dehydrogenase (336 aa).

Position 40 (D40) interacts with coenzyme F420-(gamma-Glu)n. The Proton donor role is filled by H41. Coenzyme F420-(gamma-Glu)n contacts are provided by residues T77 and 108–109 (TG). The active-site Proton acceptor is the E110. Residues N113, 176–177 (SG), and 179–180 (AA) each bind coenzyme F420-(gamma-Glu)n. Residues T194, K197, K258, and R282 each coordinate substrate.

It belongs to the F420-dependent glucose-6-phosphate dehydrogenase family. In terms of assembly, homodimer.

It catalyses the reaction oxidized coenzyme F420-(gamma-L-Glu)(n) + D-glucose 6-phosphate + H(+) = 6-phospho-D-glucono-1,5-lactone + reduced coenzyme F420-(gamma-L-Glu)(n). Its function is as follows. Catalyzes the coenzyme F420-dependent oxidation of glucose 6-phosphate (G6P) to 6-phosphogluconolactone. This Microbacterium testaceum (strain StLB037) protein is F420-dependent glucose-6-phosphate dehydrogenase.